Here is a 235-residue protein sequence, read N- to C-terminus: Elongation factor Tu, chloroplastic (235 aa).

The tr-type G domain maps to 1–125; sequence KNMITGAAQM…AVDSYIPTPE (125 aa). GTP is bound at residue 47-50; it reads NKED.

Belongs to the TRAFAC class translation factor GTPase superfamily. Classic translation factor GTPase family. EF-Tu/EF-1A subfamily.

It localises to the plastid. It is found in the chloroplast. The catalysed reaction is GTP + H2O = GDP + phosphate + H(+). GTP hydrolase that promotes the GTP-dependent binding of aminoacyl-tRNA to the A-site of ribosomes during protein biosynthesis. This chain is Elongation factor Tu, chloroplastic (tufA), found in Mantoniella squamata (Unicellular alga).